Here is a 339-residue protein sequence, read N- to C-terminus: Very-long-chain 3-oxoacyl-CoA reductase (339 aa).

Residues W21–L41 traverse the membrane as a helical segment. Positions 67, 96, 121, 148, 215, 219, 248, and 250 each coordinate NADP(+). The Proton acceptor role is filled by Y215. K219 functions as the Lowers pKa of active site Tyr in the catalytic mechanism.

It belongs to the short-chain dehydrogenases/reductases (SDR) family.

Its subcellular location is the endoplasmic reticulum membrane. It carries out the reaction a very-long-chain (3R)-3-hydroxyacyl-CoA + NADP(+) = a very-long-chain 3-oxoacyl-CoA + NADPH + H(+). Its pathway is lipid metabolism; fatty acid biosynthesis. In terms of biological role, component of the microsomal membrane bound fatty acid elongation system, which produces the 26-carbon very long-chain fatty acids (VLCFA) from palmitate. Catalyzes the reduction of the 3-ketoacyl-CoA intermediate that is formed in each cycle of fatty acid elongation. VLCFAs serve as precursors for ceramide and sphingolipids. The protein is Very-long-chain 3-oxoacyl-CoA reductase of Coprinopsis cinerea (strain Okayama-7 / 130 / ATCC MYA-4618 / FGSC 9003) (Inky cap fungus).